The chain runs to 356 residues: Cyclin-dependent kinase 5 activator 1 (356 aa).

Disordered regions lie at residues M1–S53 and I66–N99. Composition is skewed to low complexity over residues S40–N49 and S71–S92.

The protein belongs to the cyclin-dependent kinase 5 activator family. In terms of assembly, heterodimer composed of a catalytic subunit cdk-5 and a regulatory subunit cdka-1. Interaction with cdka-1 is required for cdk-5 activation. Expressed in all classes of neurons in the ventral cord.

It is found in the cytoplasm. Its subcellular location is the cell projection. It localises to the dendrite. The protein localises to the axon. Its function is as follows. Activator of the kinase cdk-5. In several motor neurons, promotes the polarized trafficking of synaptic vesicles and dense-core vesicles. In the ventral nerve cord, regulates the synaptic localization of the glutamate receptor, glr-1. In DA motor neurons, regulates axonal transport of synaptic vesicle precursors by inhibiting dynein-mediated retrograde transport. Regulates the polarized distribution of dense-core vesicles in DB motor neurons. May regulate these processes in association with cdk-5. May also play a role in GABAergic synaptic vesicle localization in the ventral nerve cord. The sequence is that of Cyclin-dependent kinase 5 activator 1 from Caenorhabditis elegans.